A 308-amino-acid chain; its full sequence is Eugenol synthase 1 (308 aa).

NADP(+) contacts are provided by residues 13 to 16 (TGYI), 35 to 45 (VRESTVSDPAK), R36, 86 to 88 (QMQ), 111 to 113 (SEF), K133, and 153 to 155 (NCF). K133 serves as the catalytic Proton donor/acceptor.

It belongs to the NmrA-type oxidoreductase family. As to expression, in flowers, mostly expressed in limbs, and, to a lower extent, in tubes.

It carries out the reaction eugenol + a carboxylate + NADP(+) = a coniferyl ester + NADPH. The enzyme catalyses eugenol + acetate + NADP(+) = (E)-coniferyl acetate + NADPH. Its pathway is aromatic compound metabolism; phenylpropanoid biosynthesis. Involved in the biosynthesis of the floral volatile eugenol. Catalyzes the synthesis of the phenylpropene eugenol from coniferyl acetate. Phenylpropenes are produced by plants as defense compounds with antimicrobial and antianimal properties, or as floral attractants of pollinators. This chain is Eugenol synthase 1, found in Petunia hybrida (Petunia).